Here is a 179-residue protein sequence, read N- to C-terminus: uncharacterized protein (179 aa).

Disordered regions lie at residues 26 to 103 and 136 to 179; these read LSAV…SYED and KHKA…SWFN. A compositionally biased stretch (basic and acidic residues) spans 34 to 61; that stretch reads QQGKNEEQRQHDEWVAERNREIQQEKQR. Residues 63–79 are compositionally biased toward low complexity; sequence ANAQAAANKRAATAAAN. Composition is skewed to basic and acidic residues over residues 82–103 and 158–179; these read ARQDKLDAEASADKKRDQSYED and GGRDLMKSVGKAEENKSDSWFN.

This is an uncharacterized protein from Escherichia coli (strain K12).